We begin with the raw amino-acid sequence, 358 residues long: Probable aminomethyltransferase (358 aa).

Belongs to the GcvT family. As to quaternary structure, the glycine cleavage system is composed of four proteins: P, T, L and H.

The enzyme catalyses N(6)-[(R)-S(8)-aminomethyldihydrolipoyl]-L-lysyl-[protein] + (6S)-5,6,7,8-tetrahydrofolate = N(6)-[(R)-dihydrolipoyl]-L-lysyl-[protein] + (6R)-5,10-methylene-5,6,7,8-tetrahydrofolate + NH4(+). Its function is as follows. The glycine cleavage system catalyzes the degradation of glycine. This chain is Probable aminomethyltransferase, found in Natronomonas pharaonis (strain ATCC 35678 / DSM 2160 / CIP 103997 / JCM 8858 / NBRC 14720 / NCIMB 2260 / Gabara) (Halobacterium pharaonis).